We begin with the raw amino-acid sequence, 320 residues long: Polyprenyl transferase pyr6 (320 aa).

A run of 6 helical transmembrane segments spans residues 22–42 (KYNC…AAAS), 60–80 (GLAF…NDWI), 101–121 (LATR…VWLM), 127–147 (GQNL…YPFG), 155–175 (LGIY…LPAW), and 186–206 (PDLL…TIYF). Asn-224 is a glycosylation site (N-linked (GlcNAc...) asparagine). A helical transmembrane segment spans residues 233 to 253 (YVHGLLLLQAVAVVMVIPWIL). A glycan (N-linked (GlcNAc...) asparagine) is linked at Asn-256. Transmembrane regions (helical) follow at residues 260–280 (WLWF…LYLF) and 296–316 (FALG…VSGS).

It belongs to the UbiA prenyltransferase family. Mg(2+) serves as cofactor.

The protein resides in the membrane. It catalyses the reaction 4-hydroxy-6-(pyridin-3-yl)-2H-pyran-2-one + (2E,6E)-farnesyl diphosphate = 4-hydroxy-3-[(2E,6E)-farnesyl]-6-(pyridin-3-yl)-2H-pyran-2-one + diphosphate. It functions in the pathway secondary metabolite biosynthesis; terpenoid biosynthesis. In terms of biological role, polyprenyl transferase; part of the gene cluster that mediates the biosynthesis of pyripyropene A, a specific human acyl-coenzyme A:cholesterol acyltransferase 2 inhibitor. The first step of the pathway is the synthesis of nicotinyl-CoA from nicotinic acid by the nicotinic acid-CoA ligase pyr1. Nicotinyl-CoA is then a substrate of polyketide synthase pyr2 to produce 4-hydroxy-6-(3-pyridinyl)-2H-pyran-2-one (HPPO) which is further prenylated by the polyprenyl transferase pyr6 to yield farnesyl-HPPO. The next steps consist of an epoxidation of farnesyl-HPPO to epoxyfarnesyl-HPPO by FAD-dependent monooxygenase pyr5 and a cyclization of the terpenoid portion by the terpene cyclase pyr4 to yield deacetyl-pyripyropene E. The 2 cytochrome P450 monooxygenases pyr3 and pyr9, and the 2 acetyltransferases pyr7 and pyr8 are involved in the conversion of deacetyl-pyripyropene E into pyripyropene A through several cycles of oxidation and acetylation steps. Pyr7 acetylates deacetyl-pyripyropene E to pyripyropene E which is oxidized to 11-deacetyl-pyripyropene O by pyr3, which is in turn acetylated into pyripyropene O by pyr8. Pyripyropene O is then oxidized to deacetyl-pyripyropene A by pyr9. Deacetyl-pyripyropene A is finally acetylated to pyripyropene A by pyr8. This chain is Polyprenyl transferase pyr6, found in Aspergillus fumigatus (strain ATCC MYA-4609 / CBS 101355 / FGSC A1100 / Af293) (Neosartorya fumigata).